The primary structure comprises 465 residues: Cysteine--tRNA ligase (465 aa).

Position 29 (cysteine 29) interacts with Zn(2+). Positions proline 31 to asparagine 41 match the 'HIGH' region motif. Zn(2+) is bound by residues cysteine 209, histidine 234, and glutamate 238. The 'KMSKS' region signature appears at lysine 266 to serine 270. ATP is bound at residue lysine 269. Phosphoserine is present on serine 270.

This sequence belongs to the class-I aminoacyl-tRNA synthetase family. As to quaternary structure, monomer. Zn(2+) serves as cofactor.

The protein localises to the cytoplasm. The enzyme catalyses tRNA(Cys) + L-cysteine + ATP = L-cysteinyl-tRNA(Cys) + AMP + diphosphate. This is Cysteine--tRNA ligase from Bacillus cereus (strain G9842).